The primary structure comprises 148 residues: MKVVLQRVSQASVTIEEQVVGQINKGFLLLVGICDDDTEADLDYLVKKISQLRVFEDEAGKMNLALGQVNGAILSVSQFTLYASTKKGNRPSFTDAGQPDYAQKMYNLFNQKLAATGIAVETGEFGADMQVALVNDGPVTILFDTRDN.

Positions 137 to 138 match the Gly-cisPro motif, important for rejection of L-amino acids motif; it reads GP.

Belongs to the DTD family. In terms of assembly, homodimer.

The protein localises to the cytoplasm. It catalyses the reaction glycyl-tRNA(Ala) + H2O = tRNA(Ala) + glycine + H(+). It carries out the reaction a D-aminoacyl-tRNA + H2O = a tRNA + a D-alpha-amino acid + H(+). An aminoacyl-tRNA editing enzyme that deacylates mischarged D-aminoacyl-tRNAs. Also deacylates mischarged glycyl-tRNA(Ala), protecting cells against glycine mischarging by AlaRS. Acts via tRNA-based rather than protein-based catalysis; rejects L-amino acids rather than detecting D-amino acids in the active site. By recycling D-aminoacyl-tRNA to D-amino acids and free tRNA molecules, this enzyme counteracts the toxicity associated with the formation of D-aminoacyl-tRNA entities in vivo and helps enforce protein L-homochirality. The protein is D-aminoacyl-tRNA deacylase of Latilactobacillus sakei subsp. sakei (strain 23K) (Lactobacillus sakei subsp. sakei).